The sequence spans 71 residues: Small ribosomal subunit protein bS21 (71 aa).

The interval 39–71 is disordered; that stretch reads EKPTTVRKRAKAAAQKRHAKKLARENARRVRLY. Positions 43-59 are enriched in basic residues; sequence TVRKRAKAAAQKRHAKK. Over residues 60–71 the composition is skewed to basic and acidic residues; it reads LARENARRVRLY.

Belongs to the bacterial ribosomal protein bS21 family.

In Vibrio atlanticus (strain LGP32) (Vibrio splendidus (strain Mel32)), this protein is Small ribosomal subunit protein bS21.